The primary structure comprises 62 residues: Defensin BmKDfsin6 (62 aa).

Positions 1–24 (MKVIAILFLLAFVLCTMEITMVEA) are cleaved as a signal peptide. 3 cysteine pairs are disulfide-bonded: cysteine 28–cysteine 49, cysteine 35–cysteine 57, and cysteine 39–cysteine 59.

It belongs to the invertebrate defensin family. Type 2 subfamily. Highly expressed in non-venom gland (hemolymph) and moderately expressed in venom gland.

It is found in the secreted. Antibacterial peptide active against Gram-positive bacteria, but not on Gram-negative bacteria. Also has weak blocking activity on Kv1.1/KCNA1, Kv1.2/KCNA2, Kv1.3/KCNA3, KCa3.1/KCNN4/IK, KCa2.3/KCNN3/SK3 and Kv11.1/KCNH2/ERG1 channels (tested at 1 uM). It inhibits potassium channel current by interacting with the pore region. The chain is Defensin BmKDfsin6 from Olivierus martensii (Manchurian scorpion).